Reading from the N-terminus, the 195-residue chain is AP-4-A phosphorylase (195 aa).

Positions 1 to 17 are enriched in basic and acidic residues; that stretch reads MSDEDRTDRATEDHTIF. The segment at 1–20 is disordered; it reads MSDEDRTDRATEDHTIFDRG. One can recognise an HIT domain in the interval 57 to 166; that stretch reads PFTEIPQLSD…VPRWGGDANF (110 aa). The short motif at 151 to 155 is the Histidine triad motif element; that stretch reads HLHVH. His153 (tele-AMP-histidine intermediate) is an active-site residue.

Homotetramer. It depends on a divalent metal cation as a cofactor.

It catalyses the reaction ADP + ATP + H(+) = P(1),P(4)-bis(5'-adenosyl) tetraphosphate + phosphate. Its function is as follows. Catabolizes diadenosine 5',5'''-P1,P4-tetraphosphate (Ap4A) into ADP and ATP. The chain is AP-4-A phosphorylase from Mycobacterium tuberculosis (strain CDC 1551 / Oshkosh).